A 145-amino-acid polypeptide reads, in one-letter code: Small ribosomal subunit protein bS6 (145 aa).

The span at 113–132 (ENMKKNERKAPKEPVKKDEE) shows a compositional bias: basic and acidic residues. The interval 113–145 (ENMKKNERKAPKEPVKKDEEENKESEEEITSEE) is disordered. Residues 133 to 145 (ENKESEEEITSEE) show a composition bias toward acidic residues.

This sequence belongs to the bacterial ribosomal protein bS6 family.

In terms of biological role, binds together with bS18 to 16S ribosomal RNA. This is Small ribosomal subunit protein bS6 from Campylobacter hominis (strain ATCC BAA-381 / DSM 21671 / CCUG 45161 / LMG 19568 / NCTC 13146 / CH001A).